A 594-amino-acid polypeptide reads, in one-letter code: RING finger protein 207 (594 aa).

The RING-type zinc-finger motif lies at 25 to 64 (CPLCHAQYERPCLLDCFHDFCAGCLRGRTADGRVACPLCQ). The segment at 93–145 (VEAVHCANCDLDCSKQDAETACFCNTCGQPLCARCRDETHRARMFARHDIVAL) adopts a B box-type; atypical zinc-finger fold. 4 residues coordinate Zn(2+): Cys-98, Cys-101, Cys-127, and His-132. The segment at 369-400 (NTLAGGSGPKVLMGPSCPSPVRKVSRSPVQKP) is disordered. Residues 424 to 458 (CRHYEDSYRGLQAEVQNLKDQVQELHRDLTKHHSL) adopt a coiled-coil conformation. The segment at 552-594 (FQASADDESENPQTAYDASRNGETPASLLLPGSVASAEPPFVN) is disordered. The segment covering 562-575 (NPQTAYDASRNGET) has biased composition (polar residues).

Interacts with the core-glycosylated, but not the fully glycosylated form of KCNH2/HERG. Interacts with DNAJA1 and HSPA8. Interacts (via the C-terminus) with HSPA1A; this interaction additively increases KCNH2 expression.

The protein resides in the cytoplasm. Plays a role in cardiac repolarization possibly by stabilizing membrane expression of the potassium channel KCNH2/HERG, or by assisting its synthesis, folding or export from the endoplasmic reticulum, in a heat shock protein-dependent manner. This is RING finger protein 207 (RNF207) from Oryctolagus cuniculus (Rabbit).